Here is a 498-residue protein sequence, read N- to C-terminus: U4/U6 small nuclear ribonucleoprotein Prp31 (498 aa).

Positions 1-24 (MSLADELLADLEEAAEEEEENLID) are disordered. Over residues 7–24 (LLADLEEAAEEEEENLID) the composition is skewed to acidic residues. Coiled-coil stretches lie at residues 84–119 (EAAP…KYSK) and 180–214 (DEEL…MSFI). The region spanning 214 to 332 (IAPNLSIIVG…IERKFDKWQE (119 aa)) is the Nop domain. The interval 333–356 (PPPVKQVKPLPAPLDGQRKKRGGR) is disordered. The short motif at 350-363 (RKKRGGRRYRKMKE) is the Nuclear localization signal (NLS) element.

Belongs to the PRP31 family. As to quaternary structure, identified in the spliceosome B complex. Component of the U4/U6-U5 tri-snRNP complex. Component of some MLL1/MLL complex.

It localises to the nucleus. The protein resides in the nucleus speckle. It is found in the cajal body. Functionally, involved in pre-mRNA splicing as component of the spliceosome. Required for the assembly of the U4/U5/U6 tri-snRNP complex, one of the building blocks of the spliceosome. This chain is U4/U6 small nuclear ribonucleoprotein Prp31 (prpf31), found in Xenopus laevis (African clawed frog).